A 609-amino-acid chain; its full sequence is Serine/threonine-protein phosphatase 4 regulatory subunit 2 (609 aa).

At serine 68 the chain carries Phosphoserine. Residues 175 to 569 (NNNGNADEGS…EEARVSPSAT (395 aa)) form a disordered region. The segment covering 183-194 (GSSPGAGSAGCA) has biased composition (low complexity). Basic and acidic residues predominate over residues 201-225 (RSDDNDQPKAKKAKLEIDGEERSEA). Residues serine 223 and serine 226 each carry the phosphoserine modification. Residues 233–244 (VATRVKNEKDEK) are compositionally biased toward basic and acidic residues. Serine 252 is modified (phosphoserine). Residues 258–270 (EIEEPDEEVDEAD) show a composition bias toward acidic residues. 2 stretches are compositionally biased toward basic and acidic residues: residues 310-351 (IEAE…KPDG) and 375-400 (EPVK…KQDD). Over residues 401–410 (IDSTETDDAP) the composition is skewed to acidic residues. The segment covering 414–462 (KPAEEKIASSESKPKTKSEDDPEAETKKSQPEKTETEAAEKSVSDEKQA) has biased composition (basic and acidic residues). Threonine 602 is modified (phosphothreonine). A Phosphoserine modification is found at serine 603.

This sequence belongs to the PPP4R2 family. As to quaternary structure, serine/threonine-protein phosphatase 4 (PP4) occurs in different assemblies of the catalytic and one or more regulatory subunits. Probably part of a PP4 PPP4C-PPP4R2-PPP4R3 complex containing Pp4-19C, PPP4R2r and flfl.

Regulatory subunit of serine/threonine-protein phosphatase 4 (PP4). The probable PP4 complex Pp4-19C-PPP4R2r-flfl (PPP4C-PPP4R2-PPP4R3) is required to prevent caspase induced cell death (in vitro). This is Serine/threonine-protein phosphatase 4 regulatory subunit 2 (PPP4R2r) from Drosophila melanogaster (Fruit fly).